A 999-amino-acid polypeptide reads, in one-letter code: Probable hemoglobin and hemoglobin-haptoglobin-binding protein 4 (999 aa).

Residues 1-24 (MTNFRLNVLAYSVMLGLTASVAYA) form the signal peptide. Residues 25–52 (EPTNQPTNQPTNQPTNQPTNQPTNQNSN) are disordered. A run of 6 repeats spans residues 26 to 29 (PTNQ), 30 to 33 (PTNQ), 34 to 37 (PTNQ), 38 to 41 (PTNQ), 42 to 45 (PTNQ), and 46 to 49 (PTNQ). A 6 X 4 AA tandem repeats of P-T-N-Q region spans residues 26–49 (PTNQPTNQPTNQPTNQPTNQPTNQ). The span at 26–50 (PTNQPTNQPTNQPTNQPTNQPTNQN) shows a compositional bias: low complexity. The TonB box motif lies at 58 to 65 (EQINVLGS). The region spanning 68-195 (NNDNTPPKIA…LGGAVLFETK (128 aa)) is the TBDR plug domain. The TBDR beta-barrel domain occupies 203 to 999 (EKDWHIGYKA…NYKLSAEITF (797 aa)). The TonB C-terminal box signature appears at 982–999 (NRFYSPGRNYKLSAEITF).

It belongs to the TonB-dependent receptor family. Hemoglobin/haptoglobin binding protein subfamily.

The protein localises to the cell outer membrane. Functionally, acts as a receptor for hemoglobin or the hemoglobin/haptoglobin complex of the human host and is required for heme uptake. The polypeptide is Probable hemoglobin and hemoglobin-haptoglobin-binding protein 4 (Haemophilus influenzae (strain ATCC 51907 / DSM 11121 / KW20 / Rd)).